The following is a 1396-amino-acid chain: DNA-directed RNA polymerase subunit beta' (1396 aa).

Residues cysteine 70, cysteine 72, cysteine 85, and cysteine 88 each coordinate Zn(2+). Mg(2+) contacts are provided by aspartate 460, aspartate 462, and aspartate 464. 4 residues coordinate Zn(2+): cysteine 807, cysteine 881, cysteine 888, and cysteine 891. Residues 1361–1378 (EPEEIEEPVPEDLEDETA) show a composition bias toward acidic residues. The interval 1361–1396 (EPEEIEEPVPEDLEDETAGADSAQAASEESVAEGKD) is disordered. Residues 1379 to 1389 (GADSAQAASEE) show a composition bias toward low complexity.

The protein belongs to the RNA polymerase beta' chain family. As to quaternary structure, the RNAP catalytic core consists of 2 alpha, 1 beta, 1 beta' and 1 omega subunit. When a sigma factor is associated with the core the holoenzyme is formed, which can initiate transcription. Mg(2+) serves as cofactor. Requires Zn(2+) as cofactor.

It carries out the reaction RNA(n) + a ribonucleoside 5'-triphosphate = RNA(n+1) + diphosphate. DNA-dependent RNA polymerase catalyzes the transcription of DNA into RNA using the four ribonucleoside triphosphates as substrates. The chain is DNA-directed RNA polymerase subunit beta' from Syntrophotalea carbinolica (strain DSM 2380 / NBRC 103641 / GraBd1) (Pelobacter carbinolicus).